Consider the following 628-residue polypeptide: Protein ETHYLENE INSENSITIVE 3 (628 aa).

The stretch at 38 to 68 (EDDYTDDEIDVDELERRMWRDKMRLKRLKEQ) forms a coiled coil. Residues 66–79 (KEQDKGKEGVDAAK) are compositionally biased toward basic and acidic residues. A disordered region spans residues 66–92 (KEQDKGKEGVDAAKQRQSQEQARRKKM). Residues 174 to 306 (TPHTLQELQD…SLARELYPES (133 aa)) are DNA-binding domain.

This sequence belongs to the EIN3 family. As to quaternary structure, acts as a homodimer to bind the primary ethylene response element. Interacts with TAF12B. Interacts with KIN10. Binds to ENAP1 in the presence of ethylene; this reaction facilitates its association with histone. In terms of processing, phosphorylated by KIN10.

It localises to the nucleus. Its activity is regulated as follows. Activated by phosphorylation by MPK3 and MPK6. Down-regulated by KIN10 that controls its protein stability under a phosphorylation-dependent manner. Satnilitzed during hypoxia (e.g. submergences) via a ceramides-triggered and CTR1-dependent manner. Its function is as follows. Transcription factor acting as a positive regulator in the ethylene response pathway, by promoting histone acetylation in an ENAP1-dependent manner, thus accelerating the expression of ethylene-responsive genes. Binds DNA. Is required for ethylene responsiveness in adult plant tissues. Binds a primary ethylene response element present in the ETHYLENE-RESPONSE-FACTOR1 promoter with consequence to activate the transcription of this gene. This Arabidopsis thaliana (Mouse-ear cress) protein is Protein ETHYLENE INSENSITIVE 3.